We begin with the raw amino-acid sequence, 279 residues long: Tryptophan synthase alpha chain (279 aa).

Active-site proton acceptor residues include Glu-50 and Asp-61.

This sequence belongs to the TrpA family. As to quaternary structure, tetramer of two alpha and two beta chains.

It carries out the reaction (1S,2R)-1-C-(indol-3-yl)glycerol 3-phosphate + L-serine = D-glyceraldehyde 3-phosphate + L-tryptophan + H2O. It participates in amino-acid biosynthesis; L-tryptophan biosynthesis; L-tryptophan from chorismate: step 5/5. The alpha subunit is responsible for the aldol cleavage of indoleglycerol phosphate to indole and glyceraldehyde 3-phosphate. This is Tryptophan synthase alpha chain from Rhizobium meliloti (strain 1021) (Ensifer meliloti).